Consider the following 143-residue polypeptide: Large ribosomal subunit protein uL11 (143 aa).

The protein belongs to the universal ribosomal protein uL11 family. In terms of assembly, part of the ribosomal stalk of the 50S ribosomal subunit. Interacts with L10 and the large rRNA to form the base of the stalk. L10 forms an elongated spine to which L12 dimers bind in a sequential fashion forming a multimeric L10(L12)X complex. In terms of processing, one or more lysine residues are methylated.

Functionally, forms part of the ribosomal stalk which helps the ribosome interact with GTP-bound translation factors. The polypeptide is Large ribosomal subunit protein uL11 (Nitrosomonas europaea (strain ATCC 19718 / CIP 103999 / KCTC 2705 / NBRC 14298)).